Here is a 129-residue protein sequence, read N- to C-terminus: Fluoride-specific ion channel FluC 2 (129 aa).

The next 4 helical transmembrane spans lie at 4–24 (LDVM…WWIG), 39–59 (TFLI…LFGV), 65–85 (YGTM…TTFS), and 100–120 (GGLA…AAWL). The Na(+) site is built by Gly-79 and Thr-82.

It belongs to the fluoride channel Fluc/FEX (TC 1.A.43) family.

Its subcellular location is the cell inner membrane. It carries out the reaction fluoride(in) = fluoride(out). With respect to regulation, na(+) is not transported, but it plays an essential structural role and its presence is essential for fluoride channel function. In terms of biological role, fluoride-specific ion channel. Important for reducing fluoride concentration in the cell, thus reducing its toxicity. This chain is Fluoride-specific ion channel FluC 2, found in Brucella suis biovar 1 (strain 1330).